A 344-amino-acid chain; its full sequence is Protein pelota homolog (344 aa).

It belongs to the eukaryotic release factor 1 family. Pelota subfamily. Monomer. The cofactor is a divalent metal cation.

It localises to the cytoplasm. In terms of biological role, may function in recognizing stalled ribosomes, interact with stem-loop structures in stalled mRNA molecules, and effect endonucleolytic cleavage of the mRNA. May play a role in the release non-functional ribosomes and degradation of damaged mRNAs. Has endoribonuclease activity. The protein is Protein pelota homolog of Saccharolobus islandicus (strain M.16.27) (Sulfolobus islandicus).